A 485-amino-acid chain; its full sequence is Velvet complex subunit B (485 aa).

Residues 33–459 (GRKHYSLEVV…GNQGQKLPLA (427 aa)) enclose the Velvet domain. A disordered region spans residues 107–353 (VLHPSSVDRH…PPPPRHTYTR (247 aa)). Composition is skewed to polar residues over residues 134–155 (APQSRAPANQTPSGGSTPTLSQ), 234–243 (RSPSSSTSDH), 267–304 (SISSYSNSQVDPSVRNHSNSEGIENPGWSSSEATSPHS), and 326–341 (THSQMAPGTCSSQHVS).

It belongs to the velvet family. VelB subfamily. Component of the heterotrimeric velvet complex composed of laeA, veA and velB; VeA acting as a bridging protein between laeA and velB. Forms a heterodimeric complex with vosA; the formation of the velB-vosA complex is light-dependent.

Its subcellular location is the nucleus. It localises to the cytoplasm. Functionally, component of the velvet transcription factor complex that controls sexual/asexual developmental ratio in response to light, promoting sexual development in the darkness while stimulating asexual sporulation under illumination. The velvet complex acts as a global regulator for secondary metabolite gene expression. Component of the velB-VosA heterodimeric complex that plays a dual role in activating genes associated with spore maturation and repressing certain development-associated genes. The velB-VosA complex binds DNA through the DNA-binding domain of vosA that recognizes an 11-nucleotide consensus sequence 5'-CTGGCCGCGGC-3' consisting of two motifs in the promoters of key developmental regulatory genes. This chain is Velvet complex subunit B, found in Laccaria bicolor (strain S238N-H82 / ATCC MYA-4686) (Bicoloured deceiver).